The primary structure comprises 312 residues: Cytochrome c biogenesis protein CcsA (312 aa).

Helical transmembrane passes span N12–F32, I47–F67, L72–F92, L98–L118, M144–I164, I220–N240, T254–I271, and A281–L301.

Belongs to the CcmF/CycK/Ccl1/NrfE/CcsA family. May interact with Ccs1.

The protein localises to the plastid. It localises to the chloroplast thylakoid membrane. Required during biogenesis of c-type cytochromes (cytochrome c6 and cytochrome f) at the step of heme attachment. In Trieres chinensis (Marine centric diatom), this protein is Cytochrome c biogenesis protein CcsA.